We begin with the raw amino-acid sequence, 212 residues long: 3-demethoxyubiquinol 3-hydroxylase (212 aa).

The Fe cation site is built by Glu61, Glu91, His94, Glu143, Glu175, and His178.

This sequence belongs to the COQ7 family. It depends on Fe cation as a cofactor.

The protein resides in the cell membrane. The enzyme catalyses a 5-methoxy-2-methyl-3-(all-trans-polyprenyl)benzene-1,4-diol + AH2 + O2 = a 3-demethylubiquinol + A + H2O. The protein operates within cofactor biosynthesis; ubiquinone biosynthesis. Catalyzes the hydroxylation of 2-nonaprenyl-3-methyl-6-methoxy-1,4-benzoquinol during ubiquinone biosynthesis. In Paraburkholderia phytofirmans (strain DSM 17436 / LMG 22146 / PsJN) (Burkholderia phytofirmans), this protein is 3-demethoxyubiquinol 3-hydroxylase.